A 141-amino-acid polypeptide reads, in one-letter code: Large ribosomal subunit protein uL11 (141 aa).

It belongs to the universal ribosomal protein uL11 family. Part of the ribosomal stalk of the 50S ribosomal subunit. Interacts with L10 and the large rRNA to form the base of the stalk. L10 forms an elongated spine to which L12 dimers bind in a sequential fashion forming a multimeric L10(L12)X complex. One or more lysine residues are methylated.

Its function is as follows. Forms part of the ribosomal stalk which helps the ribosome interact with GTP-bound translation factors. This chain is Large ribosomal subunit protein uL11, found in Ruminiclostridium cellulolyticum (strain ATCC 35319 / DSM 5812 / JCM 6584 / H10) (Clostridium cellulolyticum).